Reading from the N-terminus, the 565-residue chain is Oxygen-dependent choline dehydrogenase (565 aa).

6 to 35 lines the FAD pocket; it reads DYIIVGAGSAGNTLATRLTEDAGVTVLLLE. Residues 182–201 are disordered; the sequence is QQEGFGPMDRTVTKNGRRSS. Catalysis depends on His475, which acts as the Proton acceptor.

Belongs to the GMC oxidoreductase family. It depends on FAD as a cofactor.

It carries out the reaction choline + A = betaine aldehyde + AH2. The catalysed reaction is betaine aldehyde + NAD(+) + H2O = glycine betaine + NADH + 2 H(+). Its pathway is amine and polyamine biosynthesis; betaine biosynthesis via choline pathway; betaine aldehyde from choline (cytochrome c reductase route): step 1/1. In terms of biological role, involved in the biosynthesis of the osmoprotectant glycine betaine. Catalyzes the oxidation of choline to betaine aldehyde and betaine aldehyde to glycine betaine at the same rate. In Pseudomonas putida (strain ATCC 47054 / DSM 6125 / CFBP 8728 / NCIMB 11950 / KT2440), this protein is Oxygen-dependent choline dehydrogenase.